We begin with the raw amino-acid sequence, 439 residues long: Methylenetetrahydrofolate--tRNA-(uracil-5-)-methyltransferase TrmFO (439 aa).

8-13 (GAGLAG) lines the FAD pocket.

The protein belongs to the MnmG family. TrmFO subfamily. Requires FAD as cofactor.

It is found in the cytoplasm. It carries out the reaction uridine(54) in tRNA + (6R)-5,10-methylene-5,6,7,8-tetrahydrofolate + NADH + H(+) = 5-methyluridine(54) in tRNA + (6S)-5,6,7,8-tetrahydrofolate + NAD(+). The catalysed reaction is uridine(54) in tRNA + (6R)-5,10-methylene-5,6,7,8-tetrahydrofolate + NADPH + H(+) = 5-methyluridine(54) in tRNA + (6S)-5,6,7,8-tetrahydrofolate + NADP(+). Catalyzes the folate-dependent formation of 5-methyl-uridine at position 54 (M-5-U54) in all tRNAs. The chain is Methylenetetrahydrofolate--tRNA-(uracil-5-)-methyltransferase TrmFO from Lacticaseibacillus paracasei (strain ATCC 334 / BCRC 17002 / CCUG 31169 / CIP 107868 / KCTC 3260 / NRRL B-441) (Lactobacillus paracasei).